Consider the following 459-residue polypeptide: MTILGTTFGVFFSLLQVVSGESGYAQNGDLEDAELDDYSFSCYSQLEVNGSQHSLTCAFEDPDVNTTNLEFEICGALVEVRCLNFRKLQEIYLIETKKFLLIGNSNICVKAGEKSLTCKNVNVATIVKPEAPFDLSVIYREGANDFLVTFNTSHLQKKYVKVLMHDVAYRHEKDENNWMHVNLSSTKLTLLQRKLQPKATYEIKVRSIPGDYFKGFWSEWSPSYYFRTPEINNHSGETNPTLLTISILSVLSVVLLVILACVLWKKRIKPIIWPSLPDHKKTLEHLCKKPSKNLIVSFNPESFLDCQIHRVDDIQARDEVEGFLQDTVPPQLEESETQRPGGDVQSPSWPSENVVTTPETFGRDSPLRCLAGNVSAHDAPILSSSRSLDCRESATNGPHVNQDLLLSLGTTNSTLPPSFPPQSRILTLNPVAQGQPILTFLGSNKEEAYVTMSSFCQKR.

An N-terminal signal peptide occupies residues 1 to 20 (MTILGTTFGVFFSLLQVVSG). Residues 21–241 (ESGYAQNGDL…NNHSGETNPT (221 aa)) lie on the Extracellular side of the membrane. Cys42 and Cys57 are oxidised to a cystine. 2 N-linked (GlcNAc...) asparagine glycosylation sites follow: Asn49 and Asn65. Disulfide bonds link Cys74-Cys82 and Cys108-Cys118. Residues 131–231 (APFDLSVIYR…PSYYFRTPEI (101 aa)) form the Fibronectin type-III domain. Residue Asn182 is glycosylated (N-linked (GlcNAc...) asparagine). Residues 217–221 (WSEWS) carry the WSXWS motif motif. The chain crosses the membrane as a helical span at residues 242 to 262 (LLTISILSVLSVVLLVILACV). Topologically, residues 263–459 (LWKKRIKPII…VTMSSFCQKR (197 aa)) are cytoplasmic. The Box 1 motif signature appears at 272 to 280 (IWPSLPDHK). The residue at position 282 (Thr282) is a Phosphothreonine; by PKC. Residues 327-357 (TVPPQLEESETQRPGGDVQSPSWPSENVVTT) form a disordered region. Residues 345-357 (QSPSWPSENVVTT) are compositionally biased toward polar residues.

It belongs to the type I cytokine receptor family. Type 4 subfamily. In terms of assembly, the IL7 receptor is a heterodimer of IL7R and IL2RG. The TSLP receptor is a heterodimer of CRLF2 and IL7R. Interacts with CD53. Post-translationally, N-glycosylated IL-7Ralpha binds IL7 300-fold more tightly than the unglycosylated form. Ubiquitinated by MARCHF8; leading to lysosomal degradation.

Its subcellular location is the cell membrane. Its function is as follows. Receptor for interleukin-7. Also acts as a receptor for thymic stromal lymphopoietin (TSLP). In Callithrix jacchus (White-tufted-ear marmoset), this protein is Interleukin-7 receptor subunit alpha (IL7R).